A 1904-amino-acid chain; its full sequence is Callose synthase 10 (1904 aa).

Residues 100-132 (VIKQKLAKRDGASIDRDRDIERLWEFYKLYKRR) form an HAT 1 repeat. 6 helical membrane-spanning segments follow: residues 491–511 (SFIR…IIAF), 532–552 (AIMN…AYSM), 562–582 (VIRF…YVKV), 594–614 (FFFH…LIFG), 661–681 (YVAF…FLQI), and 722–742 (VLAI…AIIG). Residues 678-701 (FLQIKPLVKPTNTIIHLPPFQYSW) form an LRR 1 repeat. LRR repeat units follow at residues 751-774 (LGEI…FAQN) and 925-948 (TLNL…LIRN). Residues 1074-1107 (YSSSELRSENEDGISILFYLQKIFPDEWENFLER) form an HAT 2 repeat. Residues 1159 to 1181 (FLERRGLGVDDASLTNMPRGFES) form an LRR 4 repeat. Transmembrane regions (helical) follow at residues 1474–1494 (FTTV…YVFL), 1529–1549 (FLVQ…ILEL), 1554–1574 (AIFS…TFSL), 1621–1641 (AFEV…DGGA), 1644–1664 (FVLL…APYI), 1747–1767 (LALY…FKLF), 1783–1803 (FLQG…IAMT), 1811–1831 (FACV…AITW), and 1853–1873 (AAMG…PFIS). One copy of the HAT 3 repeat lies at 1659–1691 (LFAPYIFNPSGFEWQKTVEDFEDWVSWLMYKGG).

It belongs to the glycosyltransferase 48 family.

It localises to the cell membrane. The catalysed reaction is [(1-&gt;3)-beta-D-glucosyl](n) + UDP-alpha-D-glucose = [(1-&gt;3)-beta-D-glucosyl](n+1) + UDP + H(+). Involved in sporophytic and gametophytic development. Required for normal plant development and for the proper accumulation of callose at cell plates, cll walls and plasmodesmata. During pollen formation, required for the entry of microspores into mitosis. During plant growth and development, callose is found as a transitory component of the cell plate in dividing cells, is a major component of pollen mother cell walls and pollen tubes, and is found as a structural component of plasmodesmatal canals. Required for proper cell division and tissue patterning throughout plant organs, including stomatal patterning. This is Callose synthase 10 (CALS10) from Arabidopsis thaliana (Mouse-ear cress).